The chain runs to 223 residues: Small ribosomal subunit protein uS3 (223 aa).

The KH type-2 domain maps to 38 to 106 (LKRELKEKLK…EVFIDILEVN (69 aa)).

The protein belongs to the universal ribosomal protein uS3 family. As to quaternary structure, part of the 30S ribosomal subunit. Forms a tight complex with proteins S10 and S14.

In terms of biological role, binds the lower part of the 30S subunit head. Binds mRNA in the 70S ribosome, positioning it for translation. The protein is Small ribosomal subunit protein uS3 of Acidobacterium capsulatum (strain ATCC 51196 / DSM 11244 / BCRC 80197 / JCM 7670 / NBRC 15755 / NCIMB 13165 / 161).